We begin with the raw amino-acid sequence, 239 residues long: Small ribosomal subunit protein uS2 (239 aa).

The protein belongs to the universal ribosomal protein uS2 family.

This is Small ribosomal subunit protein uS2 from Synechococcus sp. (strain WH7803).